A 1236-amino-acid polypeptide reads, in one-letter code: ATP-dependent helicase/nuclease subunit A (1236 aa).

A UvrD-like helicase ATP-binding domain is found at 4-473; the sequence is VKWTKEQQQA…VNLFKNFRSR (470 aa). 25-32 contacts ATP; that stretch reads AAAGSGKT. The 295-residue stretch at 512 to 806 folds into the UvrD-like helicase C-terminal domain; the sequence is YEDKSLVGGP…RIMSIHKSKG (295 aa).

It belongs to the helicase family. AddA subfamily. Heterodimer of AddA and AddB/RexB. The cofactor is Mg(2+).

The enzyme catalyses Couples ATP hydrolysis with the unwinding of duplex DNA by translocating in the 3'-5' direction.. It catalyses the reaction ATP + H2O = ADP + phosphate + H(+). In terms of biological role, the heterodimer acts as both an ATP-dependent DNA helicase and an ATP-dependent, dual-direction single-stranded exonuclease. Recognizes the chi site generating a DNA molecule suitable for the initiation of homologous recombination. The AddA nuclease domain is required for chi fragment generation; this subunit has the helicase and 3' -&gt; 5' nuclease activities. This is ATP-dependent helicase/nuclease subunit A from Clostridium novyi (strain NT).